Here is a 133-residue protein sequence, read N- to C-terminus: Egg protein CP422 (133 aa).

Positions 1-21 (MHECMIVFFIFAVVSIYYADA) are cleaved as a signal peptide. Intrachain disulfides connect C107–C121, C114–C125, and C120–C130.

It localises to the secreted. This is Egg protein CP422 (CP422) from Schistosoma japonicum (Blood fluke).